We begin with the raw amino-acid sequence, 381 residues long: Dual specificity protein phosphatase 6 (381 aa).

Residues 30–148 form the Rhodanese domain; the sequence is GNEQLLLMDC…FQAEFALHCE (119 aa). Residues 176-203 form a disordered region; it reads SSSDIESDLDRDPNSATDSDGSPLSNSQ. A compositionally biased stretch (polar residues) spans 189 to 203; the sequence is NSATDSDGSPLSNSQ. Residues 206–349 enclose the Tyrosine-protein phosphatase domain; that stretch reads FPVEILPFLY…LLDFERTLGL (144 aa). Cys293 serves as the catalytic Phosphocysteine intermediate.

This sequence belongs to the protein-tyrosine phosphatase family. Non-receptor class dual specificity subfamily. Interacts with MAPK1/ERK2. Ubiquitinated by the SCF(FBXO31) complex, leading to its proteasomal degradation. As to expression, expressed in lung, heart, brain, and kidney, but not significantly in skeletal muscle or testis.

Its subcellular location is the cytoplasm. It carries out the reaction O-phospho-L-tyrosyl-[protein] + H2O = L-tyrosyl-[protein] + phosphate. The catalysed reaction is O-phospho-L-seryl-[protein] + H2O = L-seryl-[protein] + phosphate. The enzyme catalyses O-phospho-L-threonyl-[protein] + H2O = L-threonyl-[protein] + phosphate. Functionally, dual specificity protein phosphatase, which mediates dephosphorylation and inactivation of MAP kinases. Has a specificity for the ERK family. Implicated in muscle and neuronal differentiation. Plays an important role in alleviating chronic postoperative pain. Necessary for the normal dephosphorylation of the long-lasting phosphorylated forms of spinal MAPK1/3 and MAP kinase p38 induced by peripheral surgery, which drives the resolution of acute postoperative allodynia. Also important for dephosphorylation of MAPK1/3 in local wound tissue, which further contributes to resolution of acute pain. The protein is Dual specificity protein phosphatase 6 (Dusp6) of Rattus norvegicus (Rat).